The primary structure comprises 354 residues: Eukaryotic translation initiation factor 3 subunit H (354 aa).

The segment at 1–28 (MATRQPYQKKFQSRDQREQTSSQQAPNS) is disordered. The segment covering 19–28 (QTSSQQAPNS) has biased composition (polar residues). In terms of domain architecture, MPN spans 33–174 (VTVDALVVMK…LSAFRLSNKA (142 aa)).

It belongs to the eIF-3 subunit H family. Component of the eukaryotic translation initiation factor 3 (eIF-3) complex.

It is found in the cytoplasm. Its function is as follows. Component of the eukaryotic translation initiation factor 3 (eIF-3) complex, which is involved in protein synthesis of a specialized repertoire of mRNAs and, together with other initiation factors, stimulates binding of mRNA and methionyl-tRNAi to the 40S ribosome. The eIF-3 complex specifically targets and initiates translation of a subset of mRNAs involved in cell proliferation. The polypeptide is Eukaryotic translation initiation factor 3 subunit H (Monosiga brevicollis (Choanoflagellate)).